The sequence spans 102 residues: Ribonuclease P protein component 1 (102 aa).

Belongs to the eukaryotic/archaeal RNase P protein component 1 family. As to quaternary structure, consists of a catalytic RNA component and at least 4-5 protein subunits.

It is found in the cytoplasm. It catalyses the reaction Endonucleolytic cleavage of RNA, removing 5'-extranucleotides from tRNA precursor.. Functionally, part of ribonuclease P, a protein complex that generates mature tRNA molecules by cleaving their 5'-ends. This is Ribonuclease P protein component 1 from Archaeoglobus fulgidus (strain ATCC 49558 / DSM 4304 / JCM 9628 / NBRC 100126 / VC-16).